The chain runs to 187 residues: Elongation factor P (187 aa).

This sequence belongs to the elongation factor P family.

It is found in the cytoplasm. The protein operates within protein biosynthesis; polypeptide chain elongation. Its function is as follows. Involved in peptide bond synthesis. Stimulates efficient translation and peptide-bond synthesis on native or reconstituted 70S ribosomes in vitro. Probably functions indirectly by altering the affinity of the ribosome for aminoacyl-tRNA, thus increasing their reactivity as acceptors for peptidyl transferase. This Acidothermus cellulolyticus (strain ATCC 43068 / DSM 8971 / 11B) protein is Elongation factor P.